The primary structure comprises 122 residues: Large ribosomal subunit protein uL14 (122 aa).

This sequence belongs to the universal ribosomal protein uL14 family. In terms of assembly, part of the 50S ribosomal subunit. Forms a cluster with proteins L3 and L19. In the 70S ribosome, L14 and L19 interact and together make contacts with the 16S rRNA in bridges B5 and B8.

Its function is as follows. Binds to 23S rRNA. Forms part of two intersubunit bridges in the 70S ribosome. This Orientia tsutsugamushi (strain Boryong) (Rickettsia tsutsugamushi) protein is Large ribosomal subunit protein uL14.